The sequence spans 313 residues: DDRGK domain-containing protein 1 (313 aa).

The chain crosses the membrane as a helical span at residues methionine 1 to alanine 28. The interval methionine 1 to serine 113 is mediates interaction with CDK5RAP3. Residues alanine 29–alanine 313 are Cytoplasmic-facing. Residues glutamate 40–aspartate 88 form a disordered region. Serine 73 and serine 113 each carry phosphoserine. The segment covering serine 73–alanine 87 has biased composition (low complexity). The interval glycine 117 to leucine 215 is mediates interaction with TRIP4. The interval arginine 130–histidine 185 is disordered. The short motif at threonine 194 to glutamate 208 is the UFM1-interacting motif (UFIM) element. The segment at leucine 215–alanine 313 is mediates interaction with UFL1. The 45-residue stretch at valine 228–proline 272 folds into the PCI domain. Lysine 266 participates in a covalent cross-link: Glycyl lysine isopeptide (Lys-Gly) (interchain with G-Cter in UFM1).

It belongs to the DDRGK1 family. As to quaternary structure, component of the UFM1 ribosome E3 ligase (UREL) complex, composed of UFL1, DDRGK1 and CDK5RAP3. Interacts with (unphosphorylated) ERN1/IRE1-alpha; interaction is dependent on UFM1 and takes place in response to endoplasmic reticulum stress, regulating ERN1/IRE1-alpha stability. Interacts with NFKBIA. Interacts with SOX9. In terms of processing, ubiquitinated. Ubiquitination probably triggers proteasomal degradation and is negatively regulated by UFL1, the enzyme involved in the ufmylation of DDRGK1. Ufmylated; conjugated to ubiquitin-like protein UFM1, probably at Lys-266 by UFL1. The relevance of ufmylation is however unclear: as DDRGK1 acts as a substrate adapter for ufmylation, it is uncertain whether ufmylation is a collateral effect of the ufmylation process or whether it is required to regulate its activity.

It is found in the endoplasmic reticulum membrane. Component of the UFM1 ribosome E3 ligase (UREL) complex, a multiprotein complex that catalyzes ufmylation of endoplasmic reticulum-docked proteins. The UREL complex plays a key role in ribosome recycling by mediating mono-ufmylation of the RPL26/uL24 subunit of the 60S ribosome following ribosome dissociation: ufmylation weakens the junction between post-termination 60S subunits and SEC61 translocons, promoting release and recycling of the large ribosomal subunit from the endoplasmic reticulum membrane. Ufmylation of RPL26/uL24 and subsequent 60S ribosome recycling either take place after normal termination of translation or after ribosome stalling during cotranslational translocation at the endoplasmic reticulum. Within the UREL complex, DDRGK1 tethers the complex to the endoplasmic reticulum membrane to restrict its activity to endoplasmic reticulum-docked ribosomes and acts as an ufmylation 'reader': following RPL26/uL24 ufmylation, DDRGK1 specifically binds to ufmylated RPL26/uL24 via its UFIM motif, resulting in stable association between the 60S ribosome and the UREL complex, followed by dissociation of the 60S ribosome subunit from the endoplasmic reticulum membrane. The UREL complex is also involved in reticulophagy in response to endoplasmic reticulum stress by promoting ufmylation of proteins such as CYB5R3 and RPN1, thereby promoting lysosomal degradation of ufmylated proteins. Ufmylation-dependent reticulophagy inhibits the unfolded protein response (UPR) by regulating ERN1/IRE1-alpha stability. Acts as a regulator of immunity by promoting differentiation of B-cells into plasma cells: acts by promoting expansion of the endoplasmic reticulum and regulating the unfolded protein response (UPR). May also be required for TRIP4 ufmylation. May play a role in NF-kappa-B-mediated transcription through regulation of the phosphorylation and the degradation of NFKBIA, the inhibitor of NF-kappa-B. Plays a role in cartilage development through SOX9, inhibiting the ubiquitin-mediated proteasomal degradation of this transcriptional regulator. Required for stabilization and ufmylation of ATG9A. This is DDRGK domain-containing protein 1 from Bos taurus (Bovine).